We begin with the raw amino-acid sequence, 482 residues long: tRNA sulfurtransferase (482 aa).

Positions 61-165 (LAIRDALTRI…DDRLLLIKGR (105 aa)) constitute a THUMP domain. ATP-binding positions include 183-184 (LI), K265, G287, and Q296. A disulfide bridge links C344 with C456. Positions 404 to 482 (FGPNDVILDI…GFNNVKVYRP (79 aa)) constitute a Rhodanese domain. Catalysis depends on C456, which acts as the Cysteine persulfide intermediate.

Belongs to the ThiI family.

It localises to the cytoplasm. It catalyses the reaction [ThiI sulfur-carrier protein]-S-sulfanyl-L-cysteine + a uridine in tRNA + 2 reduced [2Fe-2S]-[ferredoxin] + ATP + H(+) = [ThiI sulfur-carrier protein]-L-cysteine + a 4-thiouridine in tRNA + 2 oxidized [2Fe-2S]-[ferredoxin] + AMP + diphosphate. The catalysed reaction is [ThiS sulfur-carrier protein]-C-terminal Gly-Gly-AMP + S-sulfanyl-L-cysteinyl-[cysteine desulfurase] + AH2 = [ThiS sulfur-carrier protein]-C-terminal-Gly-aminoethanethioate + L-cysteinyl-[cysteine desulfurase] + A + AMP + 2 H(+). Its pathway is cofactor biosynthesis; thiamine diphosphate biosynthesis. Catalyzes the ATP-dependent transfer of a sulfur to tRNA to produce 4-thiouridine in position 8 of tRNAs, which functions as a near-UV photosensor. Also catalyzes the transfer of sulfur to the sulfur carrier protein ThiS, forming ThiS-thiocarboxylate. This is a step in the synthesis of thiazole, in the thiamine biosynthesis pathway. The sulfur is donated as persulfide by IscS. The protein is tRNA sulfurtransferase of Escherichia coli (strain 55989 / EAEC).